The sequence spans 241 residues: MCATPVSPTPLPATAPLALRWRGTEPYEASFEAMRAFTDGRTAETPDEIWLVEHPPVFTLGQAGDPAHLLAADSGIPLVKVDRGGQITYHGPGQVVAYLLLDLRRRKLMVRELVTRIEQAVIDTLAAYNLAGERKAGAPGIYVAPGPAAGSHAGAKIAALGLKIRNGCSYHGVSLNVNMDLRPFLAINPCGYAGLETVDMATLGVTAGWNDVARTFAACLTANLDGSPAAVAQPQAGALTA.

Positions 43 to 228 (AETPDEIWLV…CLTANLDGSP (186 aa)) constitute a BPL/LPL catalytic domain. Substrate-binding positions include 83–90 (RGGQITYH), 159–161 (ALG), and 172–174 (GVS). C190 serves as the catalytic Acyl-thioester intermediate.

It belongs to the LipB family.

It localises to the cytoplasm. The enzyme catalyses octanoyl-[ACP] + L-lysyl-[protein] = N(6)-octanoyl-L-lysyl-[protein] + holo-[ACP] + H(+). The protein operates within protein modification; protein lipoylation via endogenous pathway; protein N(6)-(lipoyl)lysine from octanoyl-[acyl-carrier-protein]: step 1/2. In terms of biological role, catalyzes the transfer of endogenously produced octanoic acid from octanoyl-acyl-carrier-protein onto the lipoyl domains of lipoate-dependent enzymes. Lipoyl-ACP can also act as a substrate although octanoyl-ACP is likely to be the physiological substrate. The polypeptide is Octanoyltransferase (Paraburkholderia xenovorans (strain LB400)).